The sequence spans 214 residues: DNA-binding protein HupB (214 aa).

At Lys3 the chain carries N6-acetyllysine. An N6-succinyllysine modification is found at Lys3. A phosphothreonine mark is found at Thr43 and Thr45. An N6-acetyllysine mark is found at Lys72, Lys86, and Lys103. The interval 100–214 is disordered; that stretch reads PAVKRGVGAS…KKATARRGRK (115 aa). Positions 102 to 112 are enriched in low complexity; sequence VKRGVGASAAK. Lys113 is subject to N6-succinyllysine. Residues 113 to 214 are compositionally biased toward basic residues; that stretch reads KVAKKAPAKK…KKATARRGRK (102 aa). An N6-acetyllysine mark is found at Lys116 and Lys133. Lys142 is subject to N6-succinyllysine. N6-acetyllysine is present on residues Lys146 and Lys167.

It belongs to the bacterial histone-like protein family. Long actinobacterial subfamily. In terms of assembly, oligomerizes. Homodimer; the crystallized protein is missing the C-terminal 105 residues. Interacts with topoisomerase 1 (topA). Interacts with Eis. Interacts with NAD-dependent protein deacylase NPD (MRA_1161). Interacts with MRA_0812 CoA transferase. In terms of processing, phosphorylated in vivo on Ser and Thr-residues; the protein is degraded during purification so most sites were not identified, but at least one of Thr-43 and/or Thr-45 are modified in vivo. In vitro at least PknE, PknF and PknB phosphorylate HupB; PknE is the most active and phosphorylates many sites in vitro including Thr-43 and Thr-45. Post-translationally, acetylated on 8 Lys residues in vivo (probably by Eis). In vitro acetylated by Eis on 28 residues (strains H37Rv and H37Ra), many more than those identified in vivo. Also acetylated by MRA_0812. Deacetylated in vitro by NAD-dependent protein deacylase NPD (MRA_1161). Succinylated in vivo and in vitro by MRA_0812 and by Eis; only 3 residues are found to be succinylated in vivo, while 27 are modifed in vitro by MRA_0812 and 32 are succinylated by Eis. NAD-dependent protein deacylase (MRA_1161) desuccinylates this protein.

The protein localises to the cytoplasm. The protein resides in the nucleoid. It carries out the reaction 4 Fe(2+) + O2 + 4 H(+) = 4 Fe(3+) + 2 H2O. Two trans-stilbene derivatives, 4,4'-[(E)-ethene-1,2 diylbis({5[(phenylcarbonyl)amino]benzene-2,1-diyl}sulfonylimino)] dibenzoic acid and its methoxy derivative 4,4'-[1,2-ethenediylbis({5-[(4-methoxybenzoyl)amino]-2,1phenylene}sulfonylimino)] dibenzoic acid, respectively SD1 and SD4, inhibit DNA binding with 50% inhibition at 20 uM for SD1 and 1.7 uM for SD4. SD1 and SD4 have minimal inhibitory concentrations of 400 and 800 uM on strain H37Ra respectively. Its function is as follows. A nucleoid-associated protein (NAP) that plays a role in local chromosome architecture. Binds DNA non-sequence specifically; in vitro phosphorylation of an N-terminal fragment decreases DNA-binding. Stimulates supercoiling relaxation by topoisomerase 1 (Top1, topA), at higher than 80 uM inhibits relaxation, has no effect on DNA gyrase; the effect is independent of DNA-binding. Increases the intervening strand passage activity of Top1 that occurs between the two catalytic trans-esterification reactions. Does not bind ssDNA, probably helps condense chromosomes. Binds dsDNA; in vitro acetylated protein binds 10-fold less well to DNA (note in vitro acetylated protein is more heavily modified than in vivo modified protein). In vitro acetylated protein compacts DNA less well than unmodified protein. In vitro succinylated DNA bind dsDNA less well than unmodified protein (note in vitro succinylated protein is more heavily modified than in vivo modified protein). In terms of biological role, has ferroxidase activity, converts Fe(2+) into Fe(3+). Binds Fe(3+) but not Fe(2+); prevents the generation of hydroxyl radicals by the Fenton reaction and thus protects DNA from damage. May function in iron storage. Required for biofilm formation; trimethylation by recombinant human SUV39H1 (a histone methyltransferase) inhibits biofilm formation. Probably influences transcription. RNase E and HupB jointly contribute to cellular adaptation to changing growth conditions and survival during antibiotic treatment and in the host. This Mycobacterium tuberculosis (strain ATCC 25177 / H37Ra) protein is DNA-binding protein HupB.